A 1411-amino-acid chain; its full sequence is DNA-directed RNA polymerase subunit beta' (1411 aa).

Zn(2+)-binding residues include cysteine 70, cysteine 72, cysteine 85, and cysteine 88. Mg(2+)-binding residues include aspartate 460, aspartate 462, and aspartate 464. The Zn(2+) site is built by cysteine 814, cysteine 889, cysteine 896, and cysteine 899. Residues 1387–1399 are compositionally biased toward polar residues; sequence RSTSSGTEITSPS. Residues 1387-1411 are disordered; the sequence is RSTSSGTEITSPSKDAIPLGSKVGF.

Belongs to the RNA polymerase beta' chain family. As to quaternary structure, the RNAP catalytic core consists of 2 alpha, 1 beta, 1 beta' and 1 omega subunit. When a sigma factor is associated with the core the holoenzyme is formed, which can initiate transcription. Mg(2+) is required as a cofactor. It depends on Zn(2+) as a cofactor.

It catalyses the reaction RNA(n) + a ribonucleoside 5'-triphosphate = RNA(n+1) + diphosphate. Its function is as follows. DNA-dependent RNA polymerase catalyzes the transcription of DNA into RNA using the four ribonucleoside triphosphates as substrates. This chain is DNA-directed RNA polymerase subunit beta', found in Xylella fastidiosa (strain M12).